The following is a 179-amino-acid chain: Large ribosomal subunit protein uL6 (179 aa).

The protein belongs to the universal ribosomal protein uL6 family. As to quaternary structure, part of the 50S ribosomal subunit.

This protein binds to the 23S rRNA, and is important in its secondary structure. It is located near the subunit interface in the base of the L7/L12 stalk, and near the tRNA binding site of the peptidyltransferase center. The sequence is that of Large ribosomal subunit protein uL6 from Mycoplasmopsis pulmonis (strain UAB CTIP) (Mycoplasma pulmonis).